Here is a 274-residue protein sequence, read N- to C-terminus: MNSVPNELTKSQELFGQISKISHSKISISELITLLDIHYSELFTKNPWMKKEVRKLASEFVENDPNHLLSKQDACHLIEAFVNVSITSPTLLTSVDPVLYQQLEASSTNDISTVFEDESSSLPIILHPKFSSMQVRTVTSPKDAFVSAFEENKFHFAATESFFEMAFSKIDSCLTSVQSTKKDSIKSRLVERYIQNEESVKRPDKSPFDTMTEATLQSSSDKSENFTKTLLSNVLSTILSVQVIFATVIALIAISVFCFLHTSSKTTSSKTRPS.

A helical transmembrane segment spans residues 238–258; sequence ILSVQVIFATVIALIAISVFC.

Its subcellular location is the membrane. This is an uncharacterized protein from Schizosaccharomyces pombe (strain 972 / ATCC 24843) (Fission yeast).